The chain runs to 729 residues: Serine/threonine-protein kinase TBK1 (729 aa).

The 302-residue stretch at 9–310 (WLLSDILGQG…ETSDVLHRMV (302 aa)) folds into the Protein kinase domain. 15 to 23 (LGQGATANV) lines the ATP pocket. Lys30 is covalently cross-linked (Glycyl lysine isopeptide (Lys-Gly) (interchain with G-Cter in ubiquitin)). Lys38 serves as a coordination point for ATP. Catalysis depends on Asp135, which acts as the Proton acceptor. A Phosphoserine; by autocatalysis and IKKB modification is found at Ser172. The Ubiquitin-like domain maps to 309–385 (MVIHVFSLQH…ENPIFVTSRE (77 aa)). Residue Lys401 forms a Glycyl lysine isopeptide (Lys-Gly) (interchain with G-Cter in ubiquitin) linkage. 2 coiled-coil regions span residues 407-657 (DLDG…LQET) and 658-713 (LPQK…ILER). An interaction with AZI2, TANK and TBKBP1 region spans residues 621-729 (RKMLHLRKQL…DGGLRNVDCL (109 aa)). Residue Lys670 forms a Glycyl lysine isopeptide (Lys-Gly) (interchain with G-Cter in ubiquitin) linkage. A Phosphoserine modification is found at Ser716.

This sequence belongs to the protein kinase superfamily. Ser/Thr protein kinase family. I-kappa-B kinase subfamily. As to quaternary structure, homodimer. Interacts with DDX3X, TIRAP and TRAF2. Part of a ternary complex consisting of TANK, TRAF2 and TBK1. Interacts with AZI2, TANK and TBKBP1; these interactions are mutually exclusive and mediate TBK1 activation. Interacts with GSK3B; this interaction promotes TBK1 self-association and autophosphorylation. Interacts with SIKE1; SIKE1 is associated with TBK1 under physiological condition and dissociated from TBK1 upon viral infection or TLR3 stimulation. Interacts with IRF3, leading to IRF3 phosphorylation. Interacts with RIGI. Interacts with CYLD. Interacts with OPTN and TRAF3. Interacts with SRC. Interacts with the exocyst complex subunit SEC5/EXOC2; this interaction is sufficient to trigger TBK1 activity. Interacts with STING1, leading to STING1 phosphorylation. Interacts with IFIT3 (via N-terminus). Interacts with MAVS; interaction only takes place in the presence of IFIT3 and leads to MAVS phosphorylation. Interacts (via protein kinase domain) with TTLL12 (via TTL domain); the interaction prevents MAVS binding to TBK1. Interacts with TICAM1; this interaction is enhanced in the presence of WDFY1 and leads to TICAM1 phosphorylation. Interacts with TRIM26. Interacts with TRIM23. Interacts with TTC4 and IKBKE. Interacts with HNRNPA2B1. Interacts with DDX3X. Interacts with TRIM14. Interacts with CEP170; efficient complex formation may be dependent on the presence of CCDC61. Interacts with TRAF3IP3. Interacts with HSP90AA1; the interaction mediates TBK1 association with TOMM70. Interacts with TAX1BP1. Interacts with kinase IKBKB; the complex interacts with STAT1, leading to phosphorylation of STAT1 on 'Thr-748' by IKBKB. Interacts with ICOS; this interaction is critical for the maturation of T follicular regulatory cells. Interacts with RNF144B; this interaction prevents TBK1 phosphorylation and subsequent activation. Interacts with ASB8; this interaction promotes TBK1 proteasomal degradation. Post-translationally, autophosphorylation at Ser-172 activates the kinase, and is an essential step for virus-triggered signaling. Phosphorylated by IKBKB/IKKB at Ser-172. Phosphorylation requires homodimerization and ubiquitination at Lys-30 and Lys-401. Dephosphorylated at Ser-172 by PPM1B and this negatively regulates its role in mediating antiviral response. 'Lys-63'-linked polyubiquitination by MIB1 after RNA virus infection, or by NRDP1 after LPS stimulation at Lys-30 and Lys-401, participates in kinase activation. 'Lys-48'-linked polyubiquitination at Lys-670 by DTX4 leads to proteasomal degradation. 'Lys-48'-linked polyubiquitination by TRAIP also leads to proteasomal degradation. 'Lys-48'-linked polyubiquitination by TRAF7; leading to proteasomal degradation. 'Lys-63'-linked polyubiquitination by RNF128 at Lys-30 and Lys-401 leads to the activation of antiviral responses. 'Lys-48'-linked polyubiquitination after 'lys-33'-linked deubiquitination by USP38 promotes TBK1 degradation.

The protein resides in the cytoplasm. It catalyses the reaction L-seryl-[protein] + ATP = O-phospho-L-seryl-[protein] + ADP + H(+). The catalysed reaction is L-threonyl-[protein] + ATP = O-phospho-L-threonyl-[protein] + ADP + H(+). Kinase activity is inhibited competitively by amlexanox. Serine/threonine kinase that plays an essential role in regulating inflammatory responses to foreign agents. Following activation of toll-like receptors by viral or bacterial components, associates with TRAF3 and TANK and phosphorylates interferon regulatory factors (IRFs) IRF3 and IRF7 as well as DDX3X. This activity allows subsequent homodimerization and nuclear translocation of the IRFs leading to transcriptional activation of pro-inflammatory and antiviral genes including IFNA and IFNB. In order to establish such an antiviral state, TBK1 form several different complexes whose composition depends on the type of cell and cellular stimuli. Thus, several scaffolding molecules including FADD, TRADD, MAVS, AZI2, TANK or TBKBP1/SINTBAD can be recruited to the TBK1-containing-complexes. Plays a key role in IRF3 activation: acts by first phosphorylating innate adapter proteins MAVS, STING1 and TICAM1 on their pLxIS motif, leading to recruitment of IRF3, thereby licensing IRF3 for phosphorylation by TBK1. Under particular conditions, functions as a NF-kappa-B effector by phosphorylating NF-kappa-B inhibitor alpha/NFKBIA, IKBKB or RELA to translocate NF-Kappa-B to the nucleus. Restricts bacterial proliferation by phosphorylating the autophagy receptor OPTN/Optineurin on 'Ser-177', thus enhancing LC3 binding affinity and antibacterial autophagy. Phosphorylates SMCR8 component of the C9orf72-SMCR8 complex, promoting autophagosome maturation. Phosphorylates ATG8 proteins MAP1LC3C and GABARAPL2, thereby preventing their delipidation and premature removal from nascent autophagosomes. Seems to play a role in energy balance regulation by sustaining a state of chronic, low-grade inflammation in obesity, which leads to a negative impact on insulin sensitivity. Acts both as a positive and negative regulator of the mTORC1 complex, depending on the context: activates mTORC1 in response to growth factors by catalyzing phosphorylation of MTOR, while it limits the mTORC1 complex by promoting phosphorylation of RPTOR. Acts as a positive regulator of the mTORC2 complex by mediating phosphorylation of MTOR, leading to increased phosphorylation and activation of AKT1. Phosphorylates and activates AKT1. Involved in the regulation of TNF-induced RIPK1-mediated cell death, probably acting via CYLD phosphorylation that in turn controls RIPK1 ubiquitination status. Also participates in the differentiation of T follicular regulatory cells together with the receptor ICOS. The sequence is that of Serine/threonine-protein kinase TBK1 from Mus musculus (Mouse).